The sequence spans 319 residues: Mitochondrial fission regulator 1-like-A (319 aa).

Residues 1-37 (MASLGAAAEPERNLFGKDEAEAYESPEGRRSGRKKRT) form a disordered region. Basic and acidic residues predominate over residues 9–30 (EPERNLFGKDEAEAYESPEGRR).

Belongs to the MTFR1 family.

The protein localises to the mitochondrion outer membrane. Mitochondrial protein required for adaptation of miochondrial dynamics to metabolic changes. Regulates mitochondrial morphology at steady state and mediates AMPK-dependent stress-induced mitochondrial fragmentation via the control of OPA1 levels. The chain is Mitochondrial fission regulator 1-like-A (mtfr1l-a) from Xenopus laevis (African clawed frog).